Consider the following 218-residue polypeptide: Adenylate kinase (218 aa).

Residue 10–15 (GAGKGT) coordinates ATP. Residues 30-59 (STGDMFRAAMANQTEMGRLAKSFIDKGELV) are NMP. AMP-binding positions include Thr31, Arg36, 57-59 (ELV), 86-89 (GYPR), and Gln93. The segment at 127–165 (GRFICRSCGSTYHKVFNPTKVEGTCDVCGGHEFFQREDD) is LID. Arg128 provides a ligand contact to ATP. Zn(2+)-binding residues include Cys131 and Cys134. ATP is bound at residue 137–138 (TY). Residues Cys151 and Cys154 each coordinate Zn(2+). Arg162 and Arg173 together coordinate AMP. ATP is bound at residue Gln201.

The protein belongs to the adenylate kinase family. As to quaternary structure, monomer.

It localises to the cytoplasm. The enzyme catalyses AMP + ATP = 2 ADP. It functions in the pathway purine metabolism; AMP biosynthesis via salvage pathway; AMP from ADP: step 1/1. Its function is as follows. Catalyzes the reversible transfer of the terminal phosphate group between ATP and AMP. Plays an important role in cellular energy homeostasis and in adenine nucleotide metabolism. The polypeptide is Adenylate kinase (Streptococcus thermophilus (strain CNRZ 1066)).